Reading from the N-terminus, the 201-residue chain is Protein ripply1 (201 aa).

Residues 1 to 29 (MDPAASPAAAPPAAPAAAPAADPAADPAA) form a disordered region. A compositionally biased stretch (low complexity) spans 15–29 (PAAAPAADPAADPAA). The WRPW motif motif lies at 57 to 60 (AYLW). The tract at residues 99-134 (HPVRLYWPKSHSFDYLYSAGEILLNNFPVQATINLY) is ripply homology domain. Residues 136–174 (DSDSADNEEDKEEEEEEEEEEDDEEEEEDEDKDVNENEP) show a composition bias toward acidic residues. The disordered stretch occupies residues 136–201 (DSDSADNEED…SPDPHSACPN (66 aa)).

It belongs to the ripply family. In terms of tissue distribution, expressed in the anterior presomitic mesoderm and somites of stage E9.5 dpc embryos. Also expressed in tongue, diaphragm and intercostal muscles at 16.5 dpc.

Its subcellular location is the nucleus. Functionally, plays a role in somitogenesis. Essential for transcriptional repression of the segmental patterning genes, thus terminating the segmentation program in the presomitic mesoderm, and also required for the maintenance of rostrocaudal polarity in somites. The chain is Protein ripply1 from Mus musculus (Mouse).